Here is a 391-residue protein sequence, read N- to C-terminus: Dual-specificity RNA methyltransferase RlmN (391 aa).

Glutamate 115 (proton acceptor) is an active-site residue. The region spanning 121–363 (EENRGTLCIS…SPIRTPRGED (243 aa)) is the Radical SAM core domain. Cysteine 128 and cysteine 368 are joined by a disulfide. [4Fe-4S] cluster-binding residues include cysteine 135, cysteine 139, and cysteine 142. Residues 194–195 (GE), serine 226, 248–250 (SFH), and asparagine 325 contribute to the S-adenosyl-L-methionine site. Catalysis depends on cysteine 368, which acts as the S-methylcysteine intermediate.

It belongs to the radical SAM superfamily. RlmN family. [4Fe-4S] cluster is required as a cofactor.

It localises to the cytoplasm. The enzyme catalyses adenosine(2503) in 23S rRNA + 2 reduced [2Fe-2S]-[ferredoxin] + 2 S-adenosyl-L-methionine = 2-methyladenosine(2503) in 23S rRNA + 5'-deoxyadenosine + L-methionine + 2 oxidized [2Fe-2S]-[ferredoxin] + S-adenosyl-L-homocysteine. It carries out the reaction adenosine(37) in tRNA + 2 reduced [2Fe-2S]-[ferredoxin] + 2 S-adenosyl-L-methionine = 2-methyladenosine(37) in tRNA + 5'-deoxyadenosine + L-methionine + 2 oxidized [2Fe-2S]-[ferredoxin] + S-adenosyl-L-homocysteine. In terms of biological role, specifically methylates position 2 of adenine 2503 in 23S rRNA and position 2 of adenine 37 in tRNAs. m2A2503 modification seems to play a crucial role in the proofreading step occurring at the peptidyl transferase center and thus would serve to optimize ribosomal fidelity. The sequence is that of Dual-specificity RNA methyltransferase RlmN from Paracoccus denitrificans (strain Pd 1222).